A 72-amino-acid chain; its full sequence is PAMP-induced secreted peptide 1 (72 aa).

A signal peptide spans 1 to 30 (MRRVSWSTVLIVVVMVSLFFVEHVVVPAAA). 4-hydroxyproline occurs at positions 65 and 67.

In terms of processing, contains 4-hydroxyproline; hydroxylated on Pro-65 and Pro-67. In terms of tissue distribution, expressed in guard cells, hydathodes, leaf trichomes, and vascular tissues of leaves and roots.

Its subcellular location is the secreted. It is found in the extracellular space. It localises to the apoplast. Endogenous secreted peptide that acts as elicitor of immune response and positive regulator of defense response. Amplifies the immune response triggered by flg22, the active epitope of bacterial flagellin. Acts as a negative regulator of root growth. The sequence is that of PAMP-induced secreted peptide 1 from Arabidopsis thaliana (Mouse-ear cress).